Here is a 149-residue protein sequence, read N- to C-terminus: uncharacterized protein (149 aa).

2 consecutive transmembrane segments (helical) span residues 91–111 (IFIL…LFHY) and 122–142 (ISIL…ICLL).

It is found in the membrane. This is an uncharacterized protein from Dictyostelium discoideum (Social amoeba).